A 927-amino-acid chain; its full sequence is MTMTDASDLLSLSYSHYLARAAAARPALAERIAAWAAAPVTRAALDARLDELLAQGGQPPSEDALKKALRQLRGEAFGAVAERDLAGRADVAEVTGTMTDLAEAAIQRALALLAAELEAQYGEPRGPSGERLALGVVGMGKLGGRELNVSSDIDLIFVYEDDGETAGGARGPISVHEFFTRLGRRLIGVLSEATADGYVFRVDMRLRPNGDSGPLVCSLGMLEEYFYVQGREWERYAWIKGRLVTERASAAARRLAQQLDAIVKPFVYRRYLDFGVIGAIRSLHEQIRQEARRRATMRPDKADDIKLGRGGIREIEFSAQVFQLIRGGQDAGFRVQPTLAVLRHASASGLITEEVRAGLTHAYLFLRTLEHRLQYRNDAQTHAMPVDPAERAALAASLGFADYAALIDRLDQHRAFVEAQFDQVFADKADGGARREDDQAAGCIWSGALADDGADEALVARLAELGFADPAAVLARLQAVWRSSRYAGLPESSRVRFDRVAHRALEAAPGIDAAHRDETVVRCFDLLETVGRRGAYLALLTEYPAALRRVLSVLGATRWGGGYLIRHPQLLDELLDDEAIDSPFDWPAFKDALRRRLAAADGAEHQMDLLRHAHQAEVFRILLLDLAGRLSVEHVSDRLSELADAMLDVTIEVVWSQLAKRHRDTPCFAAIAYGKLGGKELGYASDLDLIFLYDDPDERAADVYTTFARRLITWLTTATGAGTLFDIDLRLRPNGEAGLLVTDLDAFRRYQLREGDAANTAWVWEHQALTRARYSAGDARIGAAFEAIRVQVLTTPRDAAVLAREIVEMREKVLAGHPNTTERFDLKHDRGGMVDIEFAVQYWVLLHAARHPEMIRNTGNIALLREVSRFGLMSEEEAETVGAAYRTYRKLQHRLRLDGMEKARVEPERVAAERQAVAALWARVFGA.

The segment at 1–428 (MTMTDASDLL…AQFDQVFADK (428 aa)) is adenylyl removase. The interval 438 to 927 (DQAAGCIWSG…AALWARVFGA (490 aa)) is adenylyl transferase.

The protein belongs to the GlnE family. Requires Mg(2+) as cofactor.

The catalysed reaction is [glutamine synthetase]-O(4)-(5'-adenylyl)-L-tyrosine + phosphate = [glutamine synthetase]-L-tyrosine + ADP. It catalyses the reaction [glutamine synthetase]-L-tyrosine + ATP = [glutamine synthetase]-O(4)-(5'-adenylyl)-L-tyrosine + diphosphate. Its function is as follows. Involved in the regulation of glutamine synthetase GlnA, a key enzyme in the process to assimilate ammonia. When cellular nitrogen levels are high, the C-terminal adenylyl transferase (AT) inactivates GlnA by covalent transfer of an adenylyl group from ATP to specific tyrosine residue of GlnA, thus reducing its activity. Conversely, when nitrogen levels are low, the N-terminal adenylyl removase (AR) activates GlnA by removing the adenylyl group by phosphorolysis, increasing its activity. The regulatory region of GlnE binds the signal transduction protein PII (GlnB) which indicates the nitrogen status of the cell. The sequence is that of Bifunctional glutamine synthetase adenylyltransferase/adenylyl-removing enzyme from Burkholderia pseudomallei (strain K96243).